Here is a 192-residue protein sequence, read N- to C-terminus: Glycerol-3-phosphate acyltransferase (192 aa).

The next 5 helical transmembrane spans lie at 4–24 (MFWLLATFAYLLGSLSFAILL), 54–74 (LAILTLLGDLCKGLLPILIAS), 80–100 (IAQQGWIGVCAVLGHLFPVYF), 112–132 (AGVLLGLYPPAAALAIAAWLL), and 154–174 (LLAWQEPHALLPMSVLTLLIV).

It belongs to the PlsY family. Probably interacts with PlsX.

It is found in the cell inner membrane. It catalyses the reaction an acyl phosphate + sn-glycerol 3-phosphate = a 1-acyl-sn-glycero-3-phosphate + phosphate. Its pathway is lipid metabolism; phospholipid metabolism. In terms of biological role, catalyzes the transfer of an acyl group from acyl-phosphate (acyl-PO(4)) to glycerol-3-phosphate (G3P) to form lysophosphatidic acid (LPA). This enzyme utilizes acyl-phosphate as fatty acyl donor, but not acyl-CoA or acyl-ACP. The chain is Glycerol-3-phosphate acyltransferase from Pseudomonas savastanoi pv. phaseolicola (strain 1448A / Race 6) (Pseudomonas syringae pv. phaseolicola (strain 1448A / Race 6)).